The chain runs to 75 residues: Putative snRNP Sm-like protein (75 aa).

Residues 4–75 (RPLDVIHRSL…NVLAISPTEE (72 aa)) form the Sm domain.

Belongs to the snRNP Sm proteins family.

The polypeptide is Putative snRNP Sm-like protein (Pyrococcus abyssi (strain GE5 / Orsay)).